The following is a 190-amino-acid chain: Casparian strip membrane protein 1 (190 aa).

The Cytoplasmic segment spans residues 1 to 24; that stretch reads MKAESGSADAKLPLPPPVGRKRRG. The chain crosses the membrane as a helical span at residues 25–45; the sequence is LAILDFLLRLLAIGATLSAAI. Over 46 to 72 the chain is Extracellular; sequence AMGTNNETLKFFTQFFQFNARFYNLSA. 2 N-linked (GlcNAc...) asparagine glycosylation sites follow: asparagine 51 and asparagine 69. The chain crosses the membrane as a helical span at residues 73–93; it reads FIYFVIANATVGLYLLLSLPF. Topologically, residues 94 to 107 are cytoplasmic; sequence SIFDIVRPRAAAFR. The chain crosses the membrane as a helical span at residues 108-128; it reads VLLIFFDTVMVAVCTSGAAAA. The Extracellular segment spans residues 129-157; it reads TAIMYVARRGNTKTNWFSICQQFNSFCDQ. A helical membrane pass occupies residues 158–178; that stretch reads ATGALGASFAAVVLLILLVLL. The Cytoplasmic segment spans residues 179–190; sequence SASTLHRQRADF.

This sequence belongs to the Casparian strip membrane proteins (CASP) family. As to quaternary structure, homodimer and heterodimers.

The protein localises to the cell membrane. Its function is as follows. Regulates membrane-cell wall junctions and localized cell wall deposition. Required for establishment of the Casparian strip membrane domain (CSD) and the subsequent formation of Casparian strips, a cell wall modification of the root endodermis that determines an apoplastic barrier between the intraorganismal apoplasm and the extraorganismal apoplasm and prevents lateral diffusion. In Pinus taeda (Loblolly pine), this protein is Casparian strip membrane protein 1.